A 195-amino-acid polypeptide reads, in one-letter code: Probable GTP-binding protein EngB (195 aa).

Positions 24–195 (DIPEIALAGR…AAWDAILSKI (172 aa)) constitute an EngB-type G domain. Residues 32–39 (GRSNVGKS), 59–63 (GKTQL), 77–80 (DVPG), 144–147 (TKAD), and 176–178 (FSS) each bind GTP. 2 residues coordinate Mg(2+): Ser39 and Thr61.

This sequence belongs to the TRAFAC class TrmE-Era-EngA-EngB-Septin-like GTPase superfamily. EngB GTPase family. Mg(2+) serves as cofactor.

In terms of biological role, necessary for normal cell division and for the maintenance of normal septation. The polypeptide is Probable GTP-binding protein EngB (Streptococcus sanguinis (strain SK36)).